The sequence spans 153 residues: 3-hydroxyacyl-[acyl-carrier-protein] dehydratase FabZ (153 aa).

H54 is a catalytic residue.

The protein belongs to the thioester dehydratase family. FabZ subfamily.

The protein localises to the cytoplasm. The catalysed reaction is a (3R)-hydroxyacyl-[ACP] = a (2E)-enoyl-[ACP] + H2O. Its function is as follows. Involved in unsaturated fatty acids biosynthesis. Catalyzes the dehydration of short chain beta-hydroxyacyl-ACPs and long chain saturated and unsaturated beta-hydroxyacyl-ACPs. The chain is 3-hydroxyacyl-[acyl-carrier-protein] dehydratase FabZ from Chlamydia muridarum (strain MoPn / Nigg).